The following is a 111-amino-acid chain: Latartoxin-2b (111 aa).

The signal sequence occupies residues 1–19 (MKVLVIIALCFFILQTALS). Residues 20–43 (EDKYESFESYVEDLKSGNMKGEAR) constitute a propeptide, removed in mature form. The Processing quadruplet motif signature appears at 40 to 43 (GEAR). 5 disulfide bridges follow: Cys-45/Cys-62, Cys-52/Cys-73, Cys-61/Cys-87, Cys-75/Cys-85, and Cys-78/Cys-99. Valine amide is present on Val-110.

It belongs to the neurotoxin 19 (CSTX) family. 11 (latartoxin) subfamily. In terms of processing, contains 5 disulfide bonds. Cleavage of the propeptide depends on the processing quadruplet motif (XXXR, with at least one of X being E). In terms of tissue distribution, expressed by the venom gland.

Its subcellular location is the secreted. Insect toxin. In Lachesana tarabaevi (Spider), this protein is Latartoxin-2b.